The chain runs to 352 residues: Protein Wnt-2 (352 aa).

Residues 1-23 (MWKIHNKLLIYILWIMEIRLVSS) form the signal peptide. Cystine bridges form between Cys-65-Cys-76, Cys-115-Cys-123, Cys-125-Cys-148, Cys-196-Cys-210, Cys-198-Cys-205, Cys-281-Cys-312, Cys-297-Cys-307, Cys-311-Cys-351, Cys-327-Cys-342, Cys-329-Cys-339, and Cys-334-Cys-335. Residues Asn-75 and Asn-119 are each glycosylated (N-linked (GlcNAc...) asparagine). Residue Ser-202 is the site of O-palmitoleoyl serine; by PORCN attachment.

It belongs to the Wnt family. Palmitoleoylated by porcupine. The lipid group functions as a sorting signal, targeting the ligand to polarized vesicles that transport Wnt2 to unique sites at the cell surface. Depalmitoleoylated by notum, leading to inhibit Wnt signaling pathway. As to expression, dynamic expression pattern during embryogenesis. Expression is predominantly segmented, with expression also seen in the limb primordia and presumptive gonads. In embryonic tracheal cells, expression is close to and dorsal to the tracheal placode.

The protein resides in the secreted. It is found in the extracellular space. Its subcellular location is the extracellular matrix. Its function is as follows. Binds as a ligand to a family of frizzled seven-transmembrane receptors and acts through a cascade of genes on the nucleus. Segment polarity protein. May function in gonadogenesis and limb development. Wg and Wnt2 have a role in the developing trachea and together are responsible for all dorsal trunk formation. The chain is Protein Wnt-2 (Wnt2) from Drosophila melanogaster (Fruit fly).